The sequence spans 196 residues: Riboflavin transporter RibU (196 aa).

The next 5 membrane-spanning stretches (helical) occupy residues 14 to 34, 46 to 66, 80 to 100, 120 to 140, and 164 to 184; these read LIAI…VPII, IVPV…WVIL, VNTY…ITVL, LISS…FVAI, and MVLP…MIIL.

It belongs to the prokaryotic riboflavin transporter (P-RFT) (TC 2.A.87) family. As to quaternary structure, in E.coli forms a stable energy-coupling factor (ECF) transporter complex probably composed of a membrane-embedded substrate-binding protein (S component), 2 ATP-binding proteins (A components) and 2 transmembrane proteins (T component). May be able to interact with more than 1 S component at a time.

The protein resides in the cell membrane. Probable riboflavin-binding protein that interacts with the energy-coupling factor (ECF) ABC-transporter complex. Unlike classic ABC transporters this ECF transporter provides the energy necessary to transport a number of different substrates. The substrates themselves are bound by transmembrane, not extracytoplasmic soluble proteins and transport it into cells. The chain is Riboflavin transporter RibU (ribU) from Leuconostoc mesenteroides subsp. mesenteroides (strain ATCC 8293 / DSM 20343 / BCRC 11652 / CCM 1803 / JCM 6124 / NCDO 523 / NBRC 100496 / NCIMB 8023 / NCTC 12954 / NRRL B-1118 / 37Y).